A 334-amino-acid polypeptide reads, in one-letter code: Glyoxylate reductase (334 aa).

Residues 158–161 (FGRI), 180–182 (SRT), and 239–241 (IAR) each bind NADP(+). Residues R241 and E270 contribute to the active site. The active-site Proton donor is the H288. 288–290 (HIG) contacts NADP(+).

Belongs to the D-isomer specific 2-hydroxyacid dehydrogenase family. GyaR subfamily. Homodimer.

Its subcellular location is the cytoplasm. It carries out the reaction glycolate + NAD(+) = glyoxylate + NADH + H(+). In Thermococcus gammatolerans (strain DSM 15229 / JCM 11827 / EJ3), this protein is Glyoxylate reductase.